Consider the following 329-residue polypeptide: Probable nicotianamine synthase 4 (329 aa).

Belongs to the nicotianamine synthase (NAS)-like family.

It carries out the reaction 3 S-adenosyl-L-methionine = nicotianamine + 3 S-methyl-5'-thioadenosine + 3 H(+). Functionally, synthesizes nicotianamine, a polyamine that is the first intermediate in the synthesis of the phytosiderophores of the mugineic acid type found in gramineae which serves as a sensor for the physiological iron status within the plant, and/or might be involved in the transport of iron. In Hordeum vulgare (Barley), this protein is Probable nicotianamine synthase 4 (NAS4).